The primary structure comprises 124 residues: Small ribosomal subunit protein uS12 (124 aa).

The disordered stretch occupies residues 1-32 (MPTINQLVRKGRRDKTAKVKTAALKGSPQRRG). Aspartate 89 carries the 3-methylthioaspartic acid modification. Residues 104-124 (TQGVKGRKQARSRYGAKKEKS) form a disordered region. Basic residues predominate over residues 108–118 (KGRKQARSRYG).

This sequence belongs to the universal ribosomal protein uS12 family. As to quaternary structure, part of the 30S ribosomal subunit. Contacts proteins S8 and S17. May interact with IF1 in the 30S initiation complex.

Its function is as follows. With S4 and S5 plays an important role in translational accuracy. In terms of biological role, interacts with and stabilizes bases of the 16S rRNA that are involved in tRNA selection in the A site and with the mRNA backbone. Located at the interface of the 30S and 50S subunits, it traverses the body of the 30S subunit contacting proteins on the other side and probably holding the rRNA structure together. The combined cluster of proteins S8, S12 and S17 appears to hold together the shoulder and platform of the 30S subunit. This Rhodococcus jostii (strain RHA1) protein is Small ribosomal subunit protein uS12.